Consider the following 70-residue polypeptide: DNA-directed RNA polymerase subunit epsilon (70 aa).

This sequence belongs to the RNA polymerase subunit epsilon family. RNAP is composed of a core of 2 alpha, a beta and a beta' subunit. The core is associated with a delta subunit, and at least one of epsilon or omega. When a sigma factor is associated with the core the holoenzyme is formed, which can initiate transcription.

It carries out the reaction RNA(n) + a ribonucleoside 5'-triphosphate = RNA(n+1) + diphosphate. Its function is as follows. A non-essential component of RNA polymerase (RNAP). The protein is DNA-directed RNA polymerase subunit epsilon of Latilactobacillus sakei subsp. sakei (strain 23K) (Lactobacillus sakei subsp. sakei).